The primary structure comprises 367 residues: tRNA-specific 2-thiouridylase MnmA (367 aa).

Residues 12-19 (GMSGGVDS) and Met38 each bind ATP. Positions 98-100 (NPD) are interaction with target base in tRNA. Cys103 functions as the Nucleophile in the catalytic mechanism. Cys103 and Cys200 are disulfide-bonded. Gly128 is an ATP binding site. The segment at 150–152 (KDQ) is interaction with tRNA. Cys200 serves as the catalytic Cysteine persulfide intermediate. An interaction with tRNA region spans residues 312–313 (RY).

Belongs to the MnmA/TRMU family. Interacts with TusE.

Its subcellular location is the cytoplasm. The enzyme catalyses S-sulfanyl-L-cysteinyl-[protein] + uridine(34) in tRNA + AH2 + ATP = 2-thiouridine(34) in tRNA + L-cysteinyl-[protein] + A + AMP + diphosphate + H(+). Catalyzes the 2-thiolation of uridine at the wobble position (U34) of tRNA(Lys), tRNA(Glu) and tRNA(Gln), leading to the formation of s(2)U34, the first step of tRNA-mnm(5)s(2)U34 synthesis. Sulfur is provided by IscS, via a sulfur-relay system. Binds ATP and its substrate tRNAs. The sequence is that of tRNA-specific 2-thiouridylase MnmA from Blochmanniella pennsylvanica (strain BPEN).